The following is a 177-amino-acid chain: Thymidine kinase (177 aa).

11–18 (GPMFSGKS) is an ATP binding site. The active-site Proton acceptor is Glu83. Phe113 serves as a coordination point for substrate. Positions 138 and 141 each coordinate Zn(2+). 157–161 (IEIIG) is a substrate binding site. 2 residues coordinate Zn(2+): Cys170 and Cys173.

This sequence belongs to the thymidine kinase family. In terms of assembly, homotetramer. Two molecules of substrate bind to each enzyme tetramer.

The enzyme catalyses thymidine + ATP = dTMP + ADP + H(+). Its function is as follows. Phosphorylates thymidine and thymidine analogs, such as azidothymidine (AZT). Part of the salvage pathway for pyrimidine deoxyribonucleotide synthesis. This is Thymidine kinase (OPG101) from Variola virus (isolate Human/India/Ind3/1967) (VARV).